The chain runs to 529 residues: Lanosterol 14-alpha demethylase (529 aa).

Residue C468 coordinates heme.

This sequence belongs to the cytochrome P450 family. Heme serves as cofactor.

It is found in the membrane. It catalyses the reaction a 14alpha-methyl steroid + 3 reduced [NADPH--hemoprotein reductase] + 3 O2 = a Delta(14) steroid + formate + 3 oxidized [NADPH--hemoprotein reductase] + 4 H2O + 4 H(+). It carries out the reaction a 14alpha-methyl steroid + reduced [NADPH--hemoprotein reductase] + O2 = a 14alpha-hydroxymethyl steroid + oxidized [NADPH--hemoprotein reductase] + H2O + H(+). The catalysed reaction is a 14alpha-hydroxymethyl steroid + reduced [NADPH--hemoprotein reductase] + O2 = a 14alpha-formyl steroid + oxidized [NADPH--hemoprotein reductase] + 2 H2O + H(+). The enzyme catalyses a 14alpha-formyl steroid + reduced [NADPH--hemoprotein reductase] + O2 = a Delta(14) steroid + formate + oxidized [NADPH--hemoprotein reductase] + H2O + 2 H(+). It catalyses the reaction lanosterol + 3 reduced [NADPH--hemoprotein reductase] + 3 O2 = 4,4-dimethyl-5alpha-cholesta-8,14,24-trien-3beta-ol + formate + 3 oxidized [NADPH--hemoprotein reductase] + 4 H2O + 4 H(+). It carries out the reaction lanosterol + reduced [NADPH--hemoprotein reductase] + O2 = 32-hydroxylanosterol + oxidized [NADPH--hemoprotein reductase] + H2O + H(+). The catalysed reaction is 32-hydroxylanosterol + reduced [NADPH--hemoprotein reductase] + O2 = 32-oxolanosterol + oxidized [NADPH--hemoprotein reductase] + 2 H2O + H(+). The enzyme catalyses 32-oxolanosterol + reduced [NADPH--hemoprotein reductase] + O2 = 4,4-dimethyl-5alpha-cholesta-8,14,24-trien-3beta-ol + formate + oxidized [NADPH--hemoprotein reductase] + H2O + 2 H(+). It catalyses the reaction eburicol + 3 reduced [NADPH--hemoprotein reductase] + 3 O2 = 14-demethyleburicol + formate + 3 oxidized [NADPH--hemoprotein reductase] + 4 H2O + 4 H(+). It carries out the reaction eburicol + reduced [NADPH--hemoprotein reductase] + O2 = 32-hydroxyeburicol + oxidized [NADPH--hemoprotein reductase] + H2O + H(+). The catalysed reaction is 32-hydroxyeburicol + reduced [NADPH--hemoprotein reductase] + O2 = 32-oxoeburicol + oxidized [NADPH--hemoprotein reductase] + 2 H2O + H(+). The enzyme catalyses 32-oxoeburicol + reduced [NADPH--hemoprotein reductase] + O2 = 14-demethyleburicol + formate + oxidized [NADPH--hemoprotein reductase] + H2O + 2 H(+). It functions in the pathway steroid biosynthesis; zymosterol biosynthesis; zymosterol from lanosterol: step 1/6. Sterol 14alpha-demethylase that plays a critical role in the third module of ergosterol biosynthesis pathway, being ergosterol the major sterol component in fungal membranes that participates in a variety of functions. The third module or late pathway involves the ergosterol synthesis itself through consecutive reactions that mainly occur in the endoplasmic reticulum (ER) membrane. In filamentous fungi, during the initial step of this module, lanosterol (lanosta-8,24-dien-3beta-ol) can be metabolized to eburicol. Sterol 14alpha-demethylase catalyzes the three-step oxidative removal of the 14alpha-methyl group (C-32) of both these sterols in the form of formate, and converts eburicol and lanosterol to 14-demethyleburicol (4,4,24-trimethylergosta-8,14,24(28)-trienol) and 4,4-dimethyl-5alpha-cholesta-8,14,24-trien-3beta-ol, respectively, which are further metabolized by other enzymes in the pathway to ergosterol. Can also use substrates not intrinsic to fungi, such as 24,25-dihydrolanosterol (DHL), producing 4,4-dimethyl-8,14-cholestadien-3-beta-ol, but at lower rates than the endogenous substrates. This is Lanosterol 14-alpha demethylase (ERG11) from Eremothecium gossypii (strain ATCC 10895 / CBS 109.51 / FGSC 9923 / NRRL Y-1056) (Yeast).